Reading from the N-terminus, the 424-residue chain is UPF0229 protein PFL_5654 (424 aa).

A disordered region spans residues 85–108 (GEHIARPQGGGGGGGGRGKAGNSG). Positions 92 to 108 (QGGGGGGGGRGKAGNSG) are enriched in gly residues.

This sequence belongs to the UPF0229 family.

The sequence is that of UPF0229 protein PFL_5654 from Pseudomonas fluorescens (strain ATCC BAA-477 / NRRL B-23932 / Pf-5).